The primary structure comprises 160 residues: SsrA-binding protein (160 aa).

Residues 132–160 (KEFDKRDTMRERDSNRELQRAVRNKGKEE) are disordered.

Belongs to the SmpB family.

It is found in the cytoplasm. Functionally, required for rescue of stalled ribosomes mediated by trans-translation. Binds to transfer-messenger RNA (tmRNA), required for stable association of tmRNA with ribosomes. tmRNA and SmpB together mimic tRNA shape, replacing the anticodon stem-loop with SmpB. tmRNA is encoded by the ssrA gene; the 2 termini fold to resemble tRNA(Ala) and it encodes a 'tag peptide', a short internal open reading frame. During trans-translation Ala-aminoacylated tmRNA acts like a tRNA, entering the A-site of stalled ribosomes, displacing the stalled mRNA. The ribosome then switches to translate the ORF on the tmRNA; the nascent peptide is terminated with the 'tag peptide' encoded by the tmRNA and targeted for degradation. The ribosome is freed to recommence translation, which seems to be the essential function of trans-translation. The sequence is that of SsrA-binding protein from Pseudomonas putida (strain ATCC 47054 / DSM 6125 / CFBP 8728 / NCIMB 11950 / KT2440).